A 407-amino-acid chain; its full sequence is Putative two-component response regulator ARR19 (407 aa).

The Response regulatory domain occupies 35–150 (NVLVVDTNFT…VMANIWQHIV (116 aa)). Position 86 is a 4-aspartylphosphate (Asp-86). Residues 214–217 (RKPR) carry the Nuclear localization signal motif. Residues 217 to 271 (RMTWTEELHQKFLEAIEIIGGIEKANPKVLVECLQEMRIEGITRSNVASHLQKHR) constitute a DNA-binding region (myb-like GARP).

It belongs to the ARR family. Type-B subfamily. As to quaternary structure, binds the target DNA as a monomer. Post-translationally, two-component system major event consists of a His-to-Asp phosphorelay between a sensor histidine kinase (HK) and a response regulator (RR). In plants, the His-to-Asp phosphorelay involves an additional intermediate named Histidine-containing phosphotransfer protein (HPt). This multistep phosphorelay consists of a His-Asp-His-Asp sequential transfer of a phosphate group between first a His and an Asp of the HK protein, followed by the transfer to a conserved His of the HPt protein and finally the transfer to an Asp in the receiver domain of the RR protein. In terms of tissue distribution, detected in trichomes and siliques.

Its subcellular location is the nucleus. Functionally, putative transcriptional activator that binds specifically to the DNA sequence 5'-[AG]GATT-3'. Functions as a response regulator involved in His-to-Asp phosphorelay signal transduction system. Phosphorylation of the Asp residue in the receiver domain activates the ability of the protein to promote the transcription of target genes. Could directly activate some type-A response regulators in response to cytokinins. This Arabidopsis thaliana (Mouse-ear cress) protein is Putative two-component response regulator ARR19 (ARR19).